The sequence spans 328 residues: Ribosomal protein L11 methyltransferase (328 aa).

S-adenosyl-L-methionine contacts are provided by threonine 153, glycine 174, aspartate 196, and asparagine 263.

The protein belongs to the methyltransferase superfamily. PrmA family.

It localises to the cytoplasm. The catalysed reaction is L-lysyl-[protein] + 3 S-adenosyl-L-methionine = N(6),N(6),N(6)-trimethyl-L-lysyl-[protein] + 3 S-adenosyl-L-homocysteine + 3 H(+). Its function is as follows. Methylates ribosomal protein L11. This is Ribosomal protein L11 methyltransferase from Chloroflexus aurantiacus (strain ATCC 29366 / DSM 635 / J-10-fl).